The primary structure comprises 434 residues: MKLFGSSGIRGIANKEITPELALNVGLVLGSRKKTAVIGRDPRVSAPMIEHALIAGMTATGCAVTEIGLVSTPTLAYAAREYECGVMVTASHNPSEYVGIKLWNPDGMAFDSAQQEEIEKAIEDADFSLVPWNLIGKFEEDGNAIRAHMNMIKKLVGSSSLKVVLDCGCGAGGTITPYLLQELGCEVITLNAQPDGHFPARNPEPNDENLTMLKKAVVDFGADLGIAHDGDADRMMAVDEKGNFVSGDEMLAIFGLYECSGKKGTVVVPVDTSMMVGDSLQGSEIVRTRVGDVYVAEGIKQSGAIYGGEPSGSWIFPKISYCPDGIYAAAKLVEIVKEKKLSELREELPRYATKRGALPCANDKKAEFMEKVKAKLEPLGKVLDIDGIRVEMDNGWVLVRPSGTEAKVRITAEARENVDEIFDMAEKIAKEALK.

Ser-91 serves as the catalytic Phosphoserine intermediate. Positions 91, 229, 231, and 233 each coordinate Mg(2+). Ser-91 is subject to Phosphoserine.

Belongs to the phosphohexose mutase family. It depends on Mg(2+) as a cofactor. Post-translationally, activated by phosphorylation.

The enzyme catalyses alpha-D-glucosamine 1-phosphate = D-glucosamine 6-phosphate. Catalyzes the conversion of glucosamine-6-phosphate to glucosamine-1-phosphate. This is Probable phosphoglucosamine mutase from Methanosarcina barkeri (strain Fusaro / DSM 804).